A 283-amino-acid chain; its full sequence is Octanoyl-[GcvH]:protein N-octanoyltransferase (283 aa).

Positions 42–248 (GQSDAVVRTW…TLQSFGGELY (207 aa)) constitute a BPL/LPL catalytic domain. Residue C147 is the Acyl-thioester intermediate of the active site.

Belongs to the octanoyltransferase LipL family.

It carries out the reaction N(6)-octanoyl-L-lysyl-[glycine-cleavage complex H protein] + L-lysyl-[lipoyl-carrier protein] = N(6)-octanoyl-L-lysyl-[lipoyl-carrier protein] + L-lysyl-[glycine-cleavage complex H protein]. It functions in the pathway protein modification; protein lipoylation via endogenous pathway; protein N(6)-(lipoyl)lysine from octanoyl-[acyl-carrier-protein]. Functionally, catalyzes the amidotransfer (transamidation) of the octanoyl moiety from octanoyl-GcvH to the lipoyl domain of the E2 subunit of lipoate-dependent enzymes. This is Octanoyl-[GcvH]:protein N-octanoyltransferase from Geobacillus kaustophilus (strain HTA426).